The primary structure comprises 250 residues: 2,3-bisphosphoglycerate-dependent phosphoglycerate mutase (250 aa).

Substrate is bound by residues 10-17 (RHGESQWN), 23-24 (TG), Arg-62, 89-92 (ERHY), Lys-100, 116-117 (RR), and 185-186 (GN). His-11 serves as the catalytic Tele-phosphohistidine intermediate. The active-site Proton donor/acceptor is the Glu-89.

This sequence belongs to the phosphoglycerate mutase family. BPG-dependent PGAM subfamily. In terms of assembly, homodimer.

The enzyme catalyses (2R)-2-phosphoglycerate = (2R)-3-phosphoglycerate. The protein operates within carbohydrate degradation; glycolysis; pyruvate from D-glyceraldehyde 3-phosphate: step 3/5. In terms of biological role, catalyzes the interconversion of 2-phosphoglycerate and 3-phosphoglycerate. The sequence is that of 2,3-bisphosphoglycerate-dependent phosphoglycerate mutase from Sodalis glossinidius (strain morsitans).